The sequence spans 308 residues: GATA transcription factor 9 (308 aa).

The tract at residues 34-57 (DDGLNTLPDSSTLSTGTLTDSSNS) is disordered. Positions 39-57 (TLPDSSTLSTGTLTDSSNS) are enriched in low complexity. A Nuclear localization signal motif is present at residues 142 to 149 (KARSKRSR). The segment at 193-247 (SGGGRRCLHCATEKTPQWRTGPMGPKTLCNACGVRYKSGRLVPEYRPASSPTFVM) adopts a GATA-type zinc-finger fold.

Belongs to the type IV zinc-finger family. Class A subfamily.

Its subcellular location is the nucleus. Transcriptional activator that specifically binds 5'-GATA-3' or 5'-GAT-3' motifs within gene promoters. May be involved in the regulation of some light-responsive genes. This Arabidopsis thaliana (Mouse-ear cress) protein is GATA transcription factor 9 (GATA9).